A 396-amino-acid polypeptide reads, in one-letter code: 1-deoxy-D-xylulose 5-phosphate reductoisomerase (396 aa).

NADPH is bound by residues Thr-10, Gly-11, Ser-12, Ile-13, and Asn-123. Lys-124 serves as a coordination point for 1-deoxy-D-xylulose 5-phosphate. Residue Glu-125 coordinates NADPH. Asp-149 provides a ligand contact to Mn(2+). Ser-150, Glu-151, Ser-185, and His-208 together coordinate 1-deoxy-D-xylulose 5-phosphate. Glu-151 provides a ligand contact to Mn(2+). Gly-214 is a binding site for NADPH. 1-deoxy-D-xylulose 5-phosphate contacts are provided by Ser-221, Asn-226, Lys-227, and Glu-230. A Mn(2+)-binding site is contributed by Glu-230.

This sequence belongs to the DXR family. Requires Mg(2+) as cofactor. Mn(2+) serves as cofactor.

The catalysed reaction is 2-C-methyl-D-erythritol 4-phosphate + NADP(+) = 1-deoxy-D-xylulose 5-phosphate + NADPH + H(+). Its pathway is isoprenoid biosynthesis; isopentenyl diphosphate biosynthesis via DXP pathway; isopentenyl diphosphate from 1-deoxy-D-xylulose 5-phosphate: step 1/6. Its function is as follows. Catalyzes the NADPH-dependent rearrangement and reduction of 1-deoxy-D-xylulose-5-phosphate (DXP) to 2-C-methyl-D-erythritol 4-phosphate (MEP). The protein is 1-deoxy-D-xylulose 5-phosphate reductoisomerase of Shewanella baltica (strain OS155 / ATCC BAA-1091).